We begin with the raw amino-acid sequence, 191 residues long: Phosphoheptose isomerase (191 aa).

The SIS domain occupies 37 to 191 (ITSSLKQGGK…LILLIEQSLL (155 aa)). 52–54 (NGG) contacts substrate. Zn(2+)-binding residues include histidine 61 and glutamate 65. Substrate is bound by residues glutamate 65, 93-94 (ND), 119-121 (STS), serine 124, and glutamine 172. Glutamine 172 and histidine 180 together coordinate Zn(2+).

It belongs to the SIS family. GmhA subfamily. The cofactor is Zn(2+).

It localises to the cytoplasm. The catalysed reaction is 2 D-sedoheptulose 7-phosphate = D-glycero-alpha-D-manno-heptose 7-phosphate + D-glycero-beta-D-manno-heptose 7-phosphate. The protein operates within carbohydrate biosynthesis; D-glycero-D-manno-heptose 7-phosphate biosynthesis; D-glycero-alpha-D-manno-heptose 7-phosphate and D-glycero-beta-D-manno-heptose 7-phosphate from sedoheptulose 7-phosphate: step 1/1. Catalyzes the isomerization of sedoheptulose 7-phosphate in D-glycero-D-manno-heptose 7-phosphate. The protein is Phosphoheptose isomerase of Cytophaga hutchinsonii (strain ATCC 33406 / DSM 1761 / CIP 103989 / NBRC 15051 / NCIMB 9469 / D465).